The sequence spans 408 residues: Neutral cholesterol ester hydrolase 1 (408 aa).

The Cytoplasmic portion of the chain corresponds to 1 to 4 (MRSS). A helical; Signal-anchor for type II membrane protein membrane pass occupies residues 5–25 (CVLLTALVALAAYYVYIPLPG). Topologically, residues 26 to 408 (SVSDPWKLML…SYIKWLDQNL (383 aa)) are lumenal. An Involved in the stabilization of the negatively charged intermediate by the formation of the oxyanion hole motif is present at residues 113-115 (HGG). The active site involves S191. 2 N-linked (GlcNAc...) asparagine glycosylation sites follow: N270 and N287. Residues D348 and H378 contribute to the active site. N-linked (GlcNAc...) asparagine glycosylation occurs at N389.

Belongs to the 'GDXG' lipolytic enzyme family. Post-translationally, N-glycosylated.

It localises to the cell membrane. The protein resides in the microsome. The catalysed reaction is a 1-O-alkyl-2-acetyl-sn-glycerol + H2O = a 1-O-alkyl-sn-glycerol + acetate + H(+). It carries out the reaction 1-O-hexadecyl-2-acetyl-sn-glycerol + H2O = 1-O-hexadecyl-sn-glycerol + acetate + H(+). The enzyme catalyses a cholesterol ester + H2O = cholesterol + a fatty acid + H(+). It catalyses the reaction cholesteryl (9Z-octadecenoate) + H2O = cholesterol + (9Z)-octadecenoate + H(+). Its function is as follows. Hydrolyzes 2-acetyl monoalkylglycerol ether (1-O-alkyl-2-acetyl-sn-glycerol), the penultimate precursor of the pathway for de novo synthesis of platelet-activating factor. May be responsible for the hydrolysis of cholesterol esters (such as cholesteryl (9Z-octadecenoate)) in macrophages. Also involved in organ detoxification by hydrolyzing exogenous organophosphorus compounds. This chain is Neutral cholesterol ester hydrolase 1 (NCEH1), found in Pongo abelii (Sumatran orangutan).